The following is a 465-amino-acid chain: uncharacterized protein (465 aa).

Disordered regions lie at residues 1–55 (MNSS…SSHQ), 70–164 (DFSE…VEGQ), and 221–313 (TTDN…KQRV). A compositionally biased stretch (basic and acidic residues) spans 40-50 (ENYKDNSDHSN). Over residues 73–82 (ESFNDNQNLK) the composition is skewed to polar residues. The span at 83–134 (NFNTTDNNFNDDYNNDYDSNNDSNNDSNNDSNNDYDNESNNYFNNDSNNDSN) shows a compositional bias: low complexity. Over residues 141 to 150 (ETTKHKLPIE) the composition is skewed to basic and acidic residues. A compositionally biased stretch (low complexity) spans 221 to 235 (TTDNQSNTESSQENN). Composition is skewed to basic and acidic residues over residues 236–249 (VIKK…DKQP) and 259–275 (IVPK…KSIK). Residues 288–306 (IDQSNKLGKSYNTNNNNSK) are compositionally biased toward polar residues. The stretch at 390–423 (NKASIAELKKMRLEQRKREIEEKRRQVENKKPDS) forms a coiled coil.

This is an uncharacterized protein from Acanthamoeba polyphaga mimivirus (APMV).